An 89-amino-acid polypeptide reads, in one-letter code: Acylphosphatase (89 aa).

In terms of domain architecture, Acylphosphatase-like spans histidine 3–isoleucine 89. Residues arginine 18 and asparagine 36 contribute to the active site.

The protein belongs to the acylphosphatase family.

The catalysed reaction is an acyl phosphate + H2O = a carboxylate + phosphate + H(+). The polypeptide is Acylphosphatase (acyP) (Staphylococcus aureus (strain Mu3 / ATCC 700698)).